Here is a 414-residue protein sequence, read N- to C-terminus: uncharacterized protein (414 aa).

A helical transmembrane segment spans residues 367–384 (TTWALTLICIACILLFFV).

It localises to the virion membrane. This is an uncharacterized protein from Human cytomegalovirus (strain Merlin) (HHV-5).